The following is a 263-amino-acid chain: Hydroxyethylthiazole kinase 2 (263 aa).

Met42 lines the substrate pocket. ATP contacts are provided by Lys118 and Thr164. Gly191 is a substrate binding site.

The protein belongs to the Thz kinase family. Mg(2+) serves as cofactor.

The catalysed reaction is 5-(2-hydroxyethyl)-4-methylthiazole + ATP = 4-methyl-5-(2-phosphooxyethyl)-thiazole + ADP + H(+). It functions in the pathway cofactor biosynthesis; thiamine diphosphate biosynthesis; 4-methyl-5-(2-phosphoethyl)-thiazole from 5-(2-hydroxyethyl)-4-methylthiazole: step 1/1. Its function is as follows. Catalyzes the phosphorylation of the hydroxyl group of 4-methyl-5-beta-hydroxyethylthiazole (THZ). This chain is Hydroxyethylthiazole kinase 2, found in Clostridium botulinum (strain Loch Maree / Type A3).